An 887-amino-acid chain; its full sequence is MKESNLVGDIRKLFVDFFIKNGHQLFPSSPLIVKDDPSLLFTNAGMVQFKHVFTDASNANVGTAVSSQKCLRVGGKHNDLENVGYTNRHHTFFEMLGNFSFGDYFKEFAVELAWSFVTKELALNKDKLYFTVYHEDQETFDLWKKISGFSENRIIKIKTNDNFWSMGSTGPCGPCSEIFYDYGEDIEGGLPGTPEEDGARFTEIWNLVFMQYNRKSDGELCALPKKCIDTGMGLERISAVMQGVHDNYDINLFKDLIKVSKKQSGNTNNELAHRVIADHVRSAAFLIAEGLTPGNEGRDYILRRIIRRAARYVYMLKYDGALMYQIFPSLIDEKSYAYMADYYPELINAKDLIISILKIEEENFKDTLVKALPLLEKELVGLSSGGVLPGDIAFKLYDTYGFPVDITLDIIKEKGIKFDEQGFYDQMDKQKERSKLNHSIKSVQQLKGKLWVDIKEHYGGTKFVGYEQYSTRAKVLSIIYEGDKSTEVANVGDRVNVLLDITPFYAESGGQKGDTGVFNVIVRQGKELLSCDDVVEVLDTKKVLDTLYIHECVIKTGSLIVGDIICAEVNCEKRKNLCANHSATHLLHYVLKSVIDRSIIQKGSLVSDDKLRFDFSYGVALTKEQLTLIEDKMFSLIRNNSPVVTHICDLKEAIADGAVALFTEKYEDHGVRVINIGDSKELCCGTHVRYTGEIGCFKIVSEASVACGVRRIEAVTGQHAIDYFREQEKMLHLIAESVKSPIDNILIQIDKLNRNNQELKQKLSDAYFSVINLQGIATDKIGSIDFLYSSLNSVPIDVVRKFINEHLVNDMIMFFSNVVGRNVMYVIGVASNLHSKIKATDFVEIIGEVIKSKGGGNNQLAQISGEYIKEVDVIFHVKNKLINVLRN.

Residues His581, His585, Cys683, and His687 each contribute to the Zn(2+) site.

The protein belongs to the class-II aminoacyl-tRNA synthetase family. Requires Zn(2+) as cofactor.

The protein resides in the cytoplasm. It carries out the reaction tRNA(Ala) + L-alanine + ATP = L-alanyl-tRNA(Ala) + AMP + diphosphate. In terms of biological role, catalyzes the attachment of alanine to tRNA(Ala) in a two-step reaction: alanine is first activated by ATP to form Ala-AMP and then transferred to the acceptor end of tRNA(Ala). Also edits incorrectly charged Ser-tRNA(Ala) and Gly-tRNA(Ala) via its editing domain. The sequence is that of Alanine--tRNA ligase from Ehrlichia canis (strain Jake).